We begin with the raw amino-acid sequence, 407 residues long: Zinc finger protein 260 (407 aa).

3 disordered regions span residues 1–21 (MLES…PGES), 39–72 (VEHK…HLRS), and 96–124 (SHQK…RNQR). The C2H2-type 1 zinc-finger motif lies at 23 to 45 (YECNECKETFSLEQNFVEHKKTH). Basic and acidic residues-rich tracts occupy residues 39–51 (VEHK…EKSP) and 100–111 (QHTEERPSESKK). Residues 51-73 (PECTGCGEESSQASSLTLHLRSR) form a C2H2-type 2; degenerate zinc finger. The C2H2-type 3 zinc finger occupies 79–101 (YKCGECGKAFSQRGNFLSHQKQH). Positions 115-124 (PMTTTVRNQR) are enriched in polar residues. 10 C2H2-type zinc fingers span residues 131–153 (YACK…EKIH), 159–181 (FECS…QNIH), 187–209 (FKCN…QRIH), 215–237 (YECK…QRSH), 243–265 (YTCK…EKIH), 271–293 (YKCN…HNIH), 299–321 (YECN…VRIH), 327–349 (YECK…MRSH), 355–377 (YGCN…MRIH), and 383–405 (YQCS…QRIH).

The protein belongs to the krueppel C2H2-type zinc-finger protein family. In terms of assembly, binds DNA. Interacts with GATA4. Predominantly present in heart. Outside the heart, it is detected in embryonic and postnatal vascular smooth muscle cells and in epithelial cells of the lung, gut and kidney at sites of epithelial morphogenesis and in the spinal cord (at protein level).

The protein resides in the nucleus. Functionally, transcription factor that acts as a cardiac regulator and an effector of alpha1-adrenergic signaling. Binds to PE response elements (PERE) present in the promoter of genes such as ANF/NPPA and acts as a direct transcriptional activator of NPPA. Also acts as a cofactor with GATA4, a key cardiac regulator. The sequence is that of Zinc finger protein 260 (Znf260) from Mus musculus (Mouse).